Here is a 176-residue protein sequence, read N- to C-terminus: Translation initiation factor IF-3 (176 aa).

This sequence belongs to the IF-3 family. As to quaternary structure, monomer.

Its subcellular location is the cytoplasm. Functionally, IF-3 binds to the 30S ribosomal subunit and shifts the equilibrium between 70S ribosomes and their 50S and 30S subunits in favor of the free subunits, thus enhancing the availability of 30S subunits on which protein synthesis initiation begins. The polypeptide is Translation initiation factor IF-3 (Nitratidesulfovibrio vulgaris (strain ATCC 29579 / DSM 644 / CCUG 34227 / NCIMB 8303 / VKM B-1760 / Hildenborough) (Desulfovibrio vulgaris)).